A 458-amino-acid polypeptide reads, in one-letter code: Transmembrane protein 135 (458 aa).

The next 6 helical transmembrane spans lie at 68–88 (ILQS…FFCI), 96–116 (FYSW…AILI), 149–169 (TLRN…MFFF), 298–318 (FQLG…SCFL), 331–351 (IVAG…TISM), and 377–397 (ADTI…VMEV).

The protein belongs to the TMEM135 family.

The protein resides in the mitochondrion membrane. Its subcellular location is the peroxisome membrane. Its function is as follows. Involved in mitochondrial metabolism by regulating the balance between mitochondrial fusion and fission. May act as a regulator of mitochondrial fission that promotes DNM1L-dependent fission through activation of DNM1L. May be involved in peroxisome organization. This Mus musculus (Mouse) protein is Transmembrane protein 135.